The following is a 65-amino-acid chain: Large ribosomal subunit protein bL35 (65 aa).

Belongs to the bacterial ribosomal protein bL35 family.

This chain is Large ribosomal subunit protein bL35, found in Acaryochloris marina (strain MBIC 11017).